The chain runs to 267 residues: 4-hydroxy-tetrahydrodipicolinate reductase (267 aa).

8–13 (GAAGRM) contacts NAD(+). NADP(+) is bound at residue Arg35. NAD(+)-binding positions include 98 to 100 (GTT) and 122 to 125 (AANF). Catalysis depends on His155, which acts as the Proton donor/acceptor. His156 serves as a coordination point for (S)-2,3,4,5-tetrahydrodipicolinate. Residue Lys159 is the Proton donor of the active site. 165-166 (GT) is a binding site for (S)-2,3,4,5-tetrahydrodipicolinate.

The protein belongs to the DapB family.

The protein localises to the cytoplasm. It catalyses the reaction (S)-2,3,4,5-tetrahydrodipicolinate + NAD(+) + H2O = (2S,4S)-4-hydroxy-2,3,4,5-tetrahydrodipicolinate + NADH + H(+). The catalysed reaction is (S)-2,3,4,5-tetrahydrodipicolinate + NADP(+) + H2O = (2S,4S)-4-hydroxy-2,3,4,5-tetrahydrodipicolinate + NADPH + H(+). It participates in amino-acid biosynthesis; L-lysine biosynthesis via DAP pathway; (S)-tetrahydrodipicolinate from L-aspartate: step 4/4. Functionally, catalyzes the conversion of 4-hydroxy-tetrahydrodipicolinate (HTPA) to tetrahydrodipicolinate. This is 4-hydroxy-tetrahydrodipicolinate reductase from Azotobacter vinelandii (strain DJ / ATCC BAA-1303).